The following is an 862-amino-acid chain: Protein PRQFV-amide (862 aa).

The N-terminal stretch at 1–20 is a signal peptide; the sequence is MSSQLLICSVFVLFTFGPNS. A propeptide spanning residues 21–79 is cleaved from the precursor; that stretch reads FPSCLAQEQAGNSDATQLSADAKAPESAKDKSGDVQNDGTKSVRSKRDLEIDFGSGDVQ. Positions 32–68 are disordered; it reads NSDATQLSADAKAPESAKDKSGDVQNDGTKSVRSKRD. The span at 43 to 53 shows a compositional bias: basic and acidic residues; the sequence is KAPESAKDKSG. Position 86 is a valine amide (Val-86). A propeptide spanning residues 90–149 is cleaved from the precursor; the sequence is AAPPVFQTPLVQDKISGFIPSETESPVIGEFAFPGSVFMDDEEALGAEEEPMDDEDLEFY. A Valine amide modification is found at Val-156. The propeptide occupies 160–175; that stretch reads GIDDYLLQEKLKDFIE. Residues Val-182, Val-190, Val-198, Val-206, Val-214, Val-222, Val-230, Val-238, and Val-246 each carry the valine amide modification. A propeptide spanning residues 250–259 is cleaved from the precursor; it reads EADPSFLFED. Val-266 bears the Valine amide mark. The propeptide occupies 270-300; the sequence is SLDFLGGANWYNPYDVTMEPQSEGSDLQGFS. At Val-307 the chain carries Valine amide. The propeptide occupies 311–319; it reads DAFDMFEFS. The residue at position 326 (Val-326) is a Valine amide. A propeptide spanning residues 330–338 is cleaved from the precursor; sequence DQDEMFDFS. Valine amide is present on Val-345. Positions 349 to 357 are excised as a propeptide; sequence DLQEFFDLS. At Val-364 the chain carries Valine amide. Residues 368–376 constitute a propeptide that is removed on maturation; it reads EFDDEIDFS. Val-383 is subject to Valine amide. Residues 387 to 395 constitute a propeptide that is removed on maturation; sequence ENDDDFDLS. Valine amide is present on Val-402. Positions 406 to 414 are excised as a propeptide; that stretch reads ENDDEFDLS. Val-421 is modified (valine amide). Over residues 424–434 the composition is skewed to basic and acidic residues; the sequence is RENDDELEFSK. Positions 424-528 are disordered; it reads RENDDELEFS…NNDDLDFSKR (105 aa). A propeptide spanning residues 425-433 is cleaved from the precursor; the sequence is ENDDELEFS. Val-440 carries the valine amide modification. Over residues 441–452 the composition is skewed to basic and acidic residues; that stretch reads GKREDDEIDFSK. The propeptide occupies 444 to 451; that stretch reads EDDEIDFS. Val-458 bears the Valine amide mark. The span at 459–471 shows a compositional bias: basic and acidic residues; that stretch reads GKRENDGEIDFSK. A propeptide spanning residues 462–470 is cleaved from the precursor; that stretch reads ENDGEIDFS. Val-477 carries the valine amide modification. Positions 478 to 490 are enriched in basic and acidic residues; the sequence is GKRENDDEIDFSK. Positions 481–489 are excised as a propeptide; it reads ENDDEIDFS. Val-496 is subject to Valine amide. Residues 497–508 show a composition bias toward basic and acidic residues; it reads GKREDGEIDFSK. The propeptide occupies 500 to 507; it reads EDGEIDFS. At Val-514 the chain carries Valine amide. Positions 515–527 are enriched in basic and acidic residues; sequence GKRENNDDLDFSK. Positions 518 to 526 are excised as a propeptide; that stretch reads ENNDDLDFS. Valine amide is present on Val-533. A propeptide spanning residues 537–545 is cleaved from the precursor; it reads EVDDEIDFS. Residues 549 to 634 are disordered; sequence RQFVGKREND…RQFVGKREND (86 aa). Residue Val-552 is modified to Valine amide. Residues 553–565 are compositionally biased toward basic and acidic residues; sequence GKRENDDDLDFSK. The propeptide occupies 556–564; sequence ENDDDLDFS. Val-571 is modified (valine amide). The span at 572–584 shows a compositional bias: basic and acidic residues; the sequence is GKRENDDDLEFSK. Positions 575–583 are excised as a propeptide; the sequence is ENDDDLEFS. Valine amide is present on Val-590. The propeptide occupies 594 to 602; the sequence is ENDPLLDFS. Val-609 bears the Valine amide mark. Positions 610–622 are enriched in basic and acidic residues; that stretch reads GKRENDDDLDFSK. A propeptide spanning residues 613-621 is cleaved from the precursor; the sequence is ENDDDLDFS. At Val-628 the chain carries Valine amide. Residues 632–640 constitute a propeptide that is removed on maturation; sequence ENDPLIDFS. Val-647 is modified (valine amide). The propeptide occupies 651 to 659; the sequence is ESDGDFELS. A Valine amide modification is found at Val-666. The propeptide occupies 670 to 677; sequence DVDGPGLS. Valine amide is present on Val-684. Positions 688–695 are excised as a propeptide; it reads EDYDIDFA. Val-702 carries the valine amide modification. Positions 706 to 714 are excised as a propeptide; sequence GNEDEFEMS. At Val-721 the chain carries Valine amide. Positions 724–757 are excised as a propeptide; it reads RNFEELDQDFLRHMHDILDKRIPQFVSLPSLTAA. Val-764 is modified (valine amide). Positions 768–812 are excised as a propeptide; that stretch reads SDAAFLETLRHLRDYVGGQDEQNVSEFSYQHPYPSDLNDVGLIQQ. Val-819 carries the post-translational modification Valine amide. The propeptide occupies 823 to 862; sequence GGDVDDINTTYRLGDFVSQPMSFVEEPSWLCRQLNAFGIS.

Expressed abundantly in the abdominal ganglion, much less in the pedal and cerebral ganglia, and rarely in the buccal and pleural ganglia.

Its subcellular location is the secreted. Its function is as follows. PRQFV-amide may act as a modulator within the feeding system as well as in other systems of Aplysia. This Aplysia californica (California sea hare) protein is Protein PRQFV-amide.